We begin with the raw amino-acid sequence, 733 residues long: uncharacterized protein (733 aa).

The chain crosses the membrane as a helical span at residues 174-194; the sequence is WAVMILASLRPELFGPIIIAG.

Its subcellular location is the membrane. This is an uncharacterized protein from Rhizobium meliloti (Ensifer meliloti).